The sequence spans 126 residues: Anti-adapter protein IraD (126 aa).

It belongs to the GpW/Gp25 family. IraD subfamily. As to quaternary structure, interacts with RssB.

The protein resides in the cytoplasm. Its function is as follows. Inhibits RpoS proteolysis by regulating RssB activity, thereby increasing the stability of the sigma stress factor RpoS during oxidative stress. Its effect on RpoS stability is due to its interaction with RssB, which probably blocks the interaction of RssB with RpoS, and the consequent delivery of the RssB-RpoS complex to the ClpXP protein degradation pathway. The protein is Anti-adapter protein IraD of Salmonella choleraesuis (strain SC-B67).